The primary structure comprises 472 residues: Ribosomal protein uS12 methylthiotransferase RimO (472 aa).

In terms of domain architecture, MTTase N-terminal spans 33-143 (NRIGFVSLGC…VLKHVHKYVP (111 aa)). C42, C78, C107, C175, C179, and C182 together coordinate [4Fe-4S] cluster. The Radical SAM core domain maps to 161-398 (LTPKHYAYLK…MEVQAEISAE (238 aa)). Positions 401–467 (ARFVGRTLDI…EHDLWAEVVD (67 aa)) constitute a TRAM domain.

This sequence belongs to the methylthiotransferase family. RimO subfamily. It depends on [4Fe-4S] cluster as a cofactor.

The protein resides in the cytoplasm. The catalysed reaction is L-aspartate(89)-[ribosomal protein uS12]-hydrogen + (sulfur carrier)-SH + AH2 + 2 S-adenosyl-L-methionine = 3-methylsulfanyl-L-aspartate(89)-[ribosomal protein uS12]-hydrogen + (sulfur carrier)-H + 5'-deoxyadenosine + L-methionine + A + S-adenosyl-L-homocysteine + 2 H(+). Its function is as follows. Catalyzes the methylthiolation of an aspartic acid residue of ribosomal protein uS12. This Shewanella baltica (strain OS195) protein is Ribosomal protein uS12 methylthiotransferase RimO.